The primary structure comprises 206 residues: Guanylate kinase (206 aa).

The region spanning 5–184 (GMLIVLSGPS…AAERIKAIIR (180 aa)) is the Guanylate kinase-like domain. ATP is bound at residue 12 to 19 (GPSGVGKG).

The protein belongs to the guanylate kinase family.

It is found in the cytoplasm. It carries out the reaction GMP + ATP = GDP + ADP. Functionally, essential for recycling GMP and indirectly, cGMP. The polypeptide is Guanylate kinase (Lactiplantibacillus plantarum (strain ATCC BAA-793 / NCIMB 8826 / WCFS1) (Lactobacillus plantarum)).